Here is a 394-residue protein sequence, read N- to C-terminus: Phosphopentomutase (394 aa).

Mn(2+) is bound by residues aspartate 14, aspartate 287, histidine 292, aspartate 328, histidine 329, and histidine 340.

Belongs to the phosphopentomutase family. The cofactor is Mn(2+).

Its subcellular location is the cytoplasm. It carries out the reaction 2-deoxy-alpha-D-ribose 1-phosphate = 2-deoxy-D-ribose 5-phosphate. The enzyme catalyses alpha-D-ribose 1-phosphate = D-ribose 5-phosphate. Its pathway is carbohydrate degradation; 2-deoxy-D-ribose 1-phosphate degradation; D-glyceraldehyde 3-phosphate and acetaldehyde from 2-deoxy-alpha-D-ribose 1-phosphate: step 1/2. In terms of biological role, isomerase that catalyzes the conversion of deoxy-ribose 1-phosphate (dRib-1-P) and ribose 1-phosphate (Rib-1-P) to deoxy-ribose 5-phosphate (dRib-5-P) and ribose 5-phosphate (Rib-5-P), respectively. The chain is Phosphopentomutase from Listeria monocytogenes serotype 4b (strain CLIP80459).